The sequence spans 806 residues: 85/88 kDa calcium-independent phospholipase A2 (806 aa).

9 ANK repeats span residues 120–147, 151–181, 185–215, 219–248, 251–281, 286–312, 316–345, 349–378, and 382–403; these read WSVA…ANCA, EGCT…QMDV, KGET…GLNQ, QGLT…RCNI, PNGY…QIHS, YGAS…NVNS, AGNT…NADA, HGNT…EVDT, and FGET…KAIL. 2 consecutive transmembrane segments (helical) span residues 480–500 and 511–531; these read LLCL…LIAI and LFDW…ILHS. The PNPLA domain occupies 481–665; sequence LCLDGGGVKG…LANNPTLDAM (185 aa). The short motif at 485-490 is the GXGXXG element; the sequence is GGGVKG. The GXSXG signature appears at 517–521; the sequence is GTSTG. Catalysis depends on S519, which acts as the Nucleophile. The active-site Proton acceptor is the D652. The DGA/G signature appears at 652-654; the sequence is DGG. The tract at residues 677–686 is calmodulin-binding (1-9-14 motif); sequence RKGQANKVKK. A calmodulin-binding (IQ motif) region spans residues 748–759; that stretch reads AWCEMVGIQYFR.

Homodimer formed by catalytic domains tightly interacting through a large hydrophobic interface. The contact area involves 3 alpha helices, several loops and a part of the beta sheet from each monomer. Both active sites of the dimer are in close proximity adopting an open conformation that provide sufficient space for phospholipid access and favoring cooperativity in deacylation-reacylation reactions. Each monomer has 9 ankyrin repeats stacked side-by-side in an elongated structure oriented outwards from the catalytic core. As to expression, four different transcripts were found to be expressed in a distinct tissue distribution.

The protein localises to the cytoplasm. The protein resides in the cell membrane. It is found in the mitochondrion. Its subcellular location is the cell projection. It localises to the pseudopodium. It carries out the reaction a 1,2-diacyl-sn-glycero-3-phosphocholine + H2O = a 1-acyl-sn-glycero-3-phosphocholine + a fatty acid + H(+). The enzyme catalyses a 1-O-alkyl-2-acyl-sn-glycero-3-phosphocholine + H2O = a 1-O-alkyl-sn-glycero-3-phosphocholine + a fatty acid + H(+). The catalysed reaction is 1,2-dihexadecanoyl-sn-glycero-3-phosphocholine + H2O = 1-hexadecanoyl-sn-glycero-3-phosphocholine + hexadecanoate + H(+). It catalyses the reaction 1-hexadecanoyl-2-(9Z-octadecenoyl)-sn-glycero-3-phosphocholine + H2O = 1-hexadecanoyl-sn-glycero-3-phosphocholine + (9Z)-octadecenoate + H(+). It carries out the reaction 1-hexadecanoyl-2-(9Z,12Z-octadecadienoyl)-sn-glycero-3-phosphocholine + H2O = (9Z,12Z)-octadecadienoate + 1-hexadecanoyl-sn-glycero-3-phosphocholine + H(+). The enzyme catalyses 1-hexadecanoyl-2-(5Z,8Z,11Z,14Z-eicosatetraenoyl)-sn-glycero-3-phosphocholine + H2O = 1-hexadecanoyl-sn-glycero-3-phosphocholine + (5Z,8Z,11Z,14Z)-eicosatetraenoate + H(+). The catalysed reaction is 1-octadecanoyl-2-(5Z,8Z,11Z,14Z-eicosatetraenoyl)-sn-glycero-3-phosphocholine + H2O = 1-octadecanoyl-sn-glycero-3-phosphocholine + (5Z,8Z,11Z,14Z)-eicosatetraenoate + H(+). It catalyses the reaction 1-hexadecanoyl-2-(5Z,8Z,11Z,14Z-eicosatetraenoyl)-sn-glycero-3-phosphoethanolamine + H2O = 1-hexadecanoyl-sn-glycero-3-phosphoethanolamine + (5Z,8Z,11Z,14Z)-eicosatetraenoate + H(+). It carries out the reaction 1,2-dihexadecanoyl-sn-glycero-3-phosphate + H2O = 1-hexadecanoyl-sn-glycero-3-phosphate + hexadecanoate + H(+). The enzyme catalyses a 1-acyl-sn-glycero-3-phosphocholine + H2O = sn-glycerol 3-phosphocholine + a fatty acid + H(+). The catalysed reaction is 1-hexadecanoyl-sn-glycero-3-phosphocholine + H2O = sn-glycerol 3-phosphocholine + hexadecanoate + H(+). It catalyses the reaction 1-(5Z,8Z,11Z,14Z-eicosatetraenoyl)-sn-glycero-3-phosphocholine + H2O = sn-glycerol 3-phosphocholine + (5Z,8Z,11Z,14Z)-eicosatetraenoate + H(+). It carries out the reaction 2-(5Z,8Z,11Z,14Z)-eicosatetraenoyl-sn-glycero-3-phosphocholine + H2O = sn-glycerol 3-phosphocholine + (5Z,8Z,11Z,14Z)-eicosatetraenoate + H(+). The enzyme catalyses 1-O-hexadecyl-2-(5Z,8Z,11Z,14Z)-eicosatetraenoyl-sn-glycero-3-phosphocholine + H2O = 1-O-hexadecyl-sn-glycero-3-phosphocholine + (5Z,8Z,11Z,14Z)-eicosatetraenoate + H(+). The catalysed reaction is 1-O-hexadecyl-2-acetyl-sn-glycero-3-phosphocholine + H2O = 1-O-hexadecyl-sn-glycero-3-phosphocholine + acetate + H(+). It catalyses the reaction hexadecanoyl-CoA + H2O = hexadecanoate + CoA + H(+). It carries out the reaction 1',3'-bis[1,2-di-(9Z-octadecenoyl)-sn-glycero-3-phospho]-glycerol + H2O = 1'-[1,2-di-(9Z-octadecenoyl)-sn-glycero-3-phospho]-3'-[1-(9Z-octadecenoyl)-sn-glycero-3-phospho]-glycerol + (9Z)-octadecenoate + H(+). The enzyme catalyses 1'-[1,2-di-(9Z-octadecenoyl)-sn-glycero-3-phospho]-3'-[1-(9Z-octadecenoyl)-sn-glycero-3-phospho]-glycerol + H2O = 1',3'-bis-[1-(9Z-octadecenoyl)-sn-glycero-3-phospho]-glycerol + (9Z)-octadecenoate + H(+). The catalysed reaction is 1',3'-bis-[1,2-di-(9Z,12Z-octadecadienoyl)-sn-glycero-3-phospho]-glycerol + H2O = 1'-[1,2-di-(9Z,12Z-octadecadienoyl)-sn-glycero-3-phospho]-3'-[1-(9Z,12Z-octadecadienoyl)-sn-glycero-3-phospho]-glycerol + (9Z,12Z)-octadecadienoate + H(+). It catalyses the reaction 1-octadecanoyl-2-(15-hydroxy-(5Z,8Z,11Z,13E)-eicosatetraenoyl)-sn-glycero-3-phosphoethanolamine + H2O = 1-octadecanoyl-sn-glycero-3-phosphoethanolamine + 15-hydroxy-(5Z,8Z,11Z,13E)-eicosatetraenoate + H(+). Its activity is regulated as follows. Activated by ATP. Inhibited by calcium-activated calmodulin. Inhibited by bromoenol lactone (BEL). Functionally, calcium-independent phospholipase involved in phospholipid remodeling with implications in cellular membrane homeostasis, mitochondrial integrity and signal transduction. Hydrolyzes the ester bond of the fatty acyl group attached at sn-1 or sn-2 position of phospholipids (phospholipase A1 and A2 activity respectively), producing lysophospholipids that are used in deacylation-reacylation cycles. Hydrolyzes both saturated and unsaturated long fatty acyl chains in various glycerophospholipid classes such as phosphatidylcholines, phosphatidylethanolamines and phosphatidates, with a preference for hydrolysis at sn-2 position. Can further hydrolyze lysophospholipids carrying saturated fatty acyl chains (lysophospholipase activity). Upon oxidative stress, contributes to remodeling of mitochondrial phospholipids in pancreatic beta cells, in a repair mechanism to reduce oxidized lipid content. Preferentially hydrolyzes oxidized polyunsaturated fatty acyl chains from cardiolipins, yielding monolysocardiolipins that can be reacylated with unoxidized fatty acyls to regenerate native cardiolipin species. Hydrolyzes oxidized glycerophosphoethanolamines present in pancreatic islets, releasing oxidized polyunsaturated fatty acids such as hydroxyeicosatetraenoates (HETEs). Has thioesterase activity toward fatty-acyl CoA releasing CoA-SH known to facilitate fatty acid transport and beta-oxidation in mitochondria particularly in skeletal muscle. Plays a role in regulation of membrane dynamics and homeostasis. Selectively hydrolyzes sn-2 arachidonoyl group in plasmalogen phospholipids, structural components of lipid rafts and myelin. Regulates F-actin polymerization at the pseudopods, which is required for both speed and directionality of MCP1/CCL2-induced monocyte chemotaxis. Targets membrane phospholipids to produce potent lipid signaling messengers. Generates lysophosphatidate (LPA, 1-acyl-glycerol-3-phosphate), which acts via G-protein receptors in various cell types. Has phospholipase A2 activity toward platelet-activating factor (PAF, 1-O-alkyl-2-acetyl-sn-glycero-3-phosphocholine), likely playing a role in inactivation of this potent pro-inflammatory signaling lipid. In response to glucose, amplifies calcium influx in pancreatic beta cells to promote INS secretion. In terms of biological role, lacks the catalytic domain and may act as a negative regulator of the catalytically active isoforms. This chain is 85/88 kDa calcium-independent phospholipase A2 (PLA2G6), found in Homo sapiens (Human).